The following is a 213-amino-acid chain: NADH dehydrogenase [ubiquinone] iron-sulfur protein 7, mitochondrial (213 aa).

The transit peptide at 1–38 directs the protein to the mitochondrion; that stretch reads MAVLSAPGLRGFRILGLRSSVGPAVQARGVHQSVATDG. Residues 31-53 are disordered; the sequence is HQSVATDGPSSTQPALPKARAVA. The span at 33-44 shows a compositional bias: polar residues; the sequence is SVATDGPSSTQP. [4Fe-4S] cluster-binding residues include Cys88 and Cys89. At Arg111 the chain carries Hydroxyarginine. [4Fe-4S] cluster is bound by residues Cys153 and Cys183.

The protein belongs to the complex I 20 kDa subunit family. Core subunit of respiratory chain NADH dehydrogenase (Complex I) which is composed of 45 different subunits. This is a component of the iron-sulfur (IP) fragment of the enzyme. The cofactor is [4Fe-4S] cluster. In terms of processing, hydroxylated at Arg-111 by NDUFAF5 early in the pathway of assembly of complex I, before the formation of the juncture between peripheral and membrane arms.

It localises to the mitochondrion inner membrane. It carries out the reaction a ubiquinone + NADH + 5 H(+)(in) = a ubiquinol + NAD(+) + 4 H(+)(out). Core subunit of the mitochondrial membrane respiratory chain NADH dehydrogenase (Complex I) which catalyzes electron transfer from NADH through the respiratory chain, using ubiquinone as an electron acceptor. Essential for the catalytic activity of complex I. The chain is NADH dehydrogenase [ubiquinone] iron-sulfur protein 7, mitochondrial (NDUFS7) from Homo sapiens (Human).